The following is a 212-amino-acid chain: Mediator of RNA polymerase II transcription subunit 20 (212 aa).

This sequence belongs to the Mediator complex subunit 20 family. Component of the Mediator complex, which is composed of MED1, MED4, MED6, MED7, MED8, MED9, MED10, MED11, MED12, MED13, MED13L, MED14, MED15, MED16, MED17, MED18, MED19, MED20, MED21, MED22, MED23, MED24, MED25, MED26, MED27, MED29, MED30, MED31, CCNC, CDK8 and CDC2L6/CDK11. The MED12, MED13, CCNC and CDK8 subunits form a distinct module termed the CDK8 module. Mediator containing the CDK8 module is less active than Mediator lacking this module in supporting transcriptional activation. Individual preparations of the Mediator complex lacking one or more distinct subunits have been variously termed ARC, CRSP, DRIP, PC2, SMCC and TRAP. Interacts with PPARG.

It localises to the nucleus. Functionally, component of the Mediator complex, a coactivator involved in the regulated transcription of nearly all RNA polymerase II-dependent genes. Mediator functions as a bridge to convey information from gene-specific regulatory proteins to the basal RNA polymerase II transcription machinery. Mediator is recruited to promoters by direct interactions with regulatory proteins and serves as a scaffold for the assembly of a functional preinitiation complex with RNA polymerase II and the general transcription factors. The chain is Mediator of RNA polymerase II transcription subunit 20 (MED20) from Macaca fascicularis (Crab-eating macaque).